Reading from the N-terminus, the 441-residue chain is Methylenetetrahydrofolate--tRNA-(uracil-5-)-methyltransferase TrmFO (441 aa).

Residue 11-16 (GGGLAG) participates in FAD binding.

This sequence belongs to the MnmG family. TrmFO subfamily. FAD serves as cofactor.

The protein resides in the cytoplasm. It catalyses the reaction uridine(54) in tRNA + (6R)-5,10-methylene-5,6,7,8-tetrahydrofolate + NADH + H(+) = 5-methyluridine(54) in tRNA + (6S)-5,6,7,8-tetrahydrofolate + NAD(+). The catalysed reaction is uridine(54) in tRNA + (6R)-5,10-methylene-5,6,7,8-tetrahydrofolate + NADPH + H(+) = 5-methyluridine(54) in tRNA + (6S)-5,6,7,8-tetrahydrofolate + NADP(+). Functionally, catalyzes the folate-dependent formation of 5-methyl-uridine at position 54 (M-5-U54) in all tRNAs. The sequence is that of Methylenetetrahydrofolate--tRNA-(uracil-5-)-methyltransferase TrmFO from Syntrophus aciditrophicus (strain SB).